Here is a 184-residue protein sequence, read N- to C-terminus: Alpha-tubulin N-acetyltransferase (184 aa).

An N-acetyltransferase domain is found at 1 to 170; it reads METFNHIDIK…NHFVIFSNYF (170 aa). Acetyl-CoA contacts are provided by residues 104 to 117 and 140 to 149; these read FYIL…GLGI and SYKLQNFLKK.

It belongs to the acetyltransferase ATAT1 family.

The enzyme catalyses L-lysyl-[alpha-tubulin] + acetyl-CoA = N(6)-acetyl-L-lysyl-[alpha-tubulin] + CoA + H(+). Specifically acetylates 'Lys-40' in alpha-tubulin on the lumenal side of microtubules. Promotes microtubule destabilization and accelerates microtubule dynamics; this activity may be independent of acetylation activity. Acetylates alpha-tubulin with a slow enzymatic rate, due to a catalytic site that is not optimized for acetyl transfer. Enters the microtubule through each end and diffuses quickly throughout the lumen of microtubules. Acetylates only long/old microtubules because of its slow acetylation rate since it does not have time to act on dynamically unstable microtubules before the enzyme is released. This Plasmodium falciparum (isolate 3D7) protein is Alpha-tubulin N-acetyltransferase.